Reading from the N-terminus, the 252-residue chain is Imidazole glycerol phosphate synthase subunit HisF (252 aa).

Active-site residues include Asp11 and Asp130.

It belongs to the HisA/HisF family. In terms of assembly, heterodimer of HisH and HisF.

It localises to the cytoplasm. The enzyme catalyses 5-[(5-phospho-1-deoxy-D-ribulos-1-ylimino)methylamino]-1-(5-phospho-beta-D-ribosyl)imidazole-4-carboxamide + L-glutamine = D-erythro-1-(imidazol-4-yl)glycerol 3-phosphate + 5-amino-1-(5-phospho-beta-D-ribosyl)imidazole-4-carboxamide + L-glutamate + H(+). Its pathway is amino-acid biosynthesis; L-histidine biosynthesis; L-histidine from 5-phospho-alpha-D-ribose 1-diphosphate: step 5/9. In terms of biological role, IGPS catalyzes the conversion of PRFAR and glutamine to IGP, AICAR and glutamate. The HisF subunit catalyzes the cyclization activity that produces IGP and AICAR from PRFAR using the ammonia provided by the HisH subunit. The polypeptide is Imidazole glycerol phosphate synthase subunit HisF (Polynucleobacter necessarius subsp. necessarius (strain STIR1)).